The primary structure comprises 269 residues: Autophagy-related protein 5 (269 aa).

K102 is covalently cross-linked (Glycyl lysine isopeptide (Lys-Gly) (interchain with G-Cter in ATG12)).

It belongs to the ATG5 family. In terms of assembly, conjugated with ATG12. The ATG5-ATG12 conjugate forms a complex with several units of ATG16. The ATG12-ATG5 conjugate also associates with ATG3. In terms of processing, conjugated to ATG12; which is essential for autophagy. Conjugation with ATG12 involves ATG7 as an E1-like activating enzyme and ATG10 as an E2-like conjugating enzyme.

The protein resides in the preautophagosomal structure membrane. Functionally, involved in cytoplasm to vacuole transport (Cvt) and autophagic vesicle formation. Autophagy is essential for maintenance of amino acid levels and protein synthesis under nitrogen starvation. Required for selective autophagic degradation of the nucleus (nucleophagy). Also required for mitophagy, which eliminates defective or superfluous mitochondria in order to fulfill cellular energy requirements and prevent excess ROS production. Conjugation with ATG12, through a ubiquitin-like conjugating system involving ATG7 as an E1-like activating enzyme and ATG10 as an E2-like conjugating enzyme, is essential for its function. The ATG12-ATG5 conjugate acts as an E3-like enzyme which is required for lipidation of ATG8 and ATG8 association to the vesicle membranes. ATG12-ATG5 rearranges the ATG3 catalytic center and enhances its E2 activity. Required for proper vegetative growth, asexual/sexual reproduction, but, unlike several plant and animal pathogenic fungi, where ATG5 is required for infection, in B.bassiana it is dispensable for pathogenesis. The protein is Autophagy-related protein 5 of Beauveria bassiana (strain ARSEF 2860) (White muscardine disease fungus).